Consider the following 150-residue polypeptide: Ribosome maturation factor RimP (150 aa).

The protein belongs to the RimP family.

Its subcellular location is the cytoplasm. Required for maturation of 30S ribosomal subunits. In Francisella tularensis subsp. holarctica (strain LVS), this protein is Ribosome maturation factor RimP.